Here is a 430-residue protein sequence, read N- to C-terminus: Tyrosine--tRNA ligase (430 aa).

Tyrosine 32 serves as a coordination point for L-tyrosine. A 'HIGH' region motif is present at residues 37–46 (PTADSLHIGH). Residues tyrosine 172 and glutamine 176 each contribute to the L-tyrosine site. Positions 232–236 (KFGKT) match the 'KMSKS' region motif. Lysine 235 is a binding site for ATP. The S4 RNA-binding domain maps to 362–429 (IKAVDLCTEK…GKKNYYLLIA (68 aa)).

The protein belongs to the class-I aminoacyl-tRNA synthetase family. TyrS type 1 subfamily. As to quaternary structure, homodimer.

The protein localises to the cytoplasm. It catalyses the reaction tRNA(Tyr) + L-tyrosine + ATP = L-tyrosyl-tRNA(Tyr) + AMP + diphosphate + H(+). Functionally, catalyzes the attachment of tyrosine to tRNA(Tyr) in a two-step reaction: tyrosine is first activated by ATP to form Tyr-AMP and then transferred to the acceptor end of tRNA(Tyr). The chain is Tyrosine--tRNA ligase from Parabacteroides distasonis (strain ATCC 8503 / DSM 20701 / CIP 104284 / JCM 5825 / NCTC 11152).